Here is a 76-residue protein sequence, read N- to C-terminus: Large ribosomal subunit protein eL20 (76 aa).

The protein belongs to the eukaryotic ribosomal protein eL20 family. In terms of assembly, part of the 50S ribosomal subunit. Binds 23S rRNA.

The chain is Large ribosomal subunit protein eL20 from Methanococcus maripaludis (strain C5 / ATCC BAA-1333).